The primary structure comprises 250 residues: Serine/arginine-rich splicing factor RS31A (250 aa).

RRM domains lie at 2 to 74 (RHVY…WAKD) and 95 to 166 (KTLF…YALR). The tract at residues 170-250 (EREDRYAGSR…SRSPIQRARG (81 aa)) is disordered. A compositionally biased stretch (basic residues) spans 177-191 (GSRRRRSPSPVYRRR). 5 positions are modified to phosphoserine: Ser183, Ser185, Ser201, Ser218, and Ser243. Residues 192–230 (PSPDYTRRRSPEYDRYKGPAPYERRKSPDYGRRSSDYGR) show a composition bias toward basic and acidic residues.

It belongs to the splicing factor SR family. RS subfamily. As to quaternary structure, component of the spliceosome. Interacts with MOS14.

The protein localises to the nucleus speckle. It localises to the nucleus. The protein resides in the nucleoplasm. Its function is as follows. Probably involved in intron recognition and spliceosome assembly. This is Serine/arginine-rich splicing factor RS31A (RS31A) from Arabidopsis thaliana (Mouse-ear cress).